An 816-amino-acid polypeptide reads, in one-letter code: Larval serum protein 1 alpha chain (816 aa).

Positions 1-16 are cleaved as a signal peptide; it reads MKFAIAFLACVAVVTA.

The protein belongs to the hemocyanin family. In terms of assembly, heterohexamer, composed of three subunits, alpha, beta and gamma. As to expression, larval hemolymph.

The protein resides in the secreted. It is found in the extracellular space. Larval storage protein (LSP) which may serve as a store of amino acids for synthesis of adult proteins. This Drosophila melanogaster (Fruit fly) protein is Larval serum protein 1 alpha chain (Lsp1alpha).